The primary structure comprises 256 residues: Small ribosomal subunit protein eS1 (256 aa).

The residue at position 2 (Ala-2) is an N-acetylalanine; partial.

The protein belongs to the eukaryotic ribosomal protein eS1 family. In terms of assembly, component of the small ribosomal subunit. Mature ribosomes consist of a small (40S) and a large (60S) subunit. The 40S subunit contains about 33 different proteins and 1 molecule of RNA (18S). The 60S subunit contains about 49 different proteins and 3 molecules of RNA (25S, 5.8S and 5S).

It localises to the cytoplasm. The chain is Small ribosomal subunit protein eS1 from Komagataella phaffii (strain GS115 / ATCC 20864) (Yeast).